A 212-amino-acid chain; its full sequence is Proteasome subunit beta (212 aa).

A propeptide spans 1 to 11 (MSQEHQDVKTG) (removed in mature form; by autocatalysis). The active-site Nucleophile is the Thr12.

The protein belongs to the peptidase T1B family. As to quaternary structure, the 20S proteasome core is composed of 14 alpha and 14 beta subunits that assemble into four stacked heptameric rings, resulting in a barrel-shaped structure. The two inner rings, each composed of seven catalytic beta subunits, are sandwiched by two outer rings, each composed of seven alpha subunits. The catalytic chamber with the active sites is on the inside of the barrel. Has a gated structure, the ends of the cylinder being occluded by the N-termini of the alpha-subunits. Is capped at one or both ends by the proteasome regulatory ATPase, PAN.

The protein localises to the cytoplasm. The enzyme catalyses Cleavage of peptide bonds with very broad specificity.. The formation of the proteasomal ATPase PAN-20S proteasome complex, via the docking of the C-termini of PAN into the intersubunit pockets in the alpha-rings, triggers opening of the gate for substrate entry. Interconversion between the open-gate and close-gate conformations leads to a dynamic regulation of the 20S proteasome proteolysis activity. Component of the proteasome core, a large protease complex with broad specificity involved in protein degradation. The polypeptide is Proteasome subunit beta (Methanocorpusculum labreanum (strain ATCC 43576 / DSM 4855 / Z)).